Consider the following 95-residue polypeptide: Aspartyl/glutamyl-tRNA(Asn/Gln) amidotransferase subunit C (95 aa).

Belongs to the GatC family. In terms of assembly, heterotrimer of A, B and C subunits.

It carries out the reaction L-glutamyl-tRNA(Gln) + L-glutamine + ATP + H2O = L-glutaminyl-tRNA(Gln) + L-glutamate + ADP + phosphate + H(+). The catalysed reaction is L-aspartyl-tRNA(Asn) + L-glutamine + ATP + H2O = L-asparaginyl-tRNA(Asn) + L-glutamate + ADP + phosphate + 2 H(+). Allows the formation of correctly charged Asn-tRNA(Asn) or Gln-tRNA(Gln) through the transamidation of misacylated Asp-tRNA(Asn) or Glu-tRNA(Gln) in organisms which lack either or both of asparaginyl-tRNA or glutaminyl-tRNA synthetases. The reaction takes place in the presence of glutamine and ATP through an activated phospho-Asp-tRNA(Asn) or phospho-Glu-tRNA(Gln). In Desulforapulum autotrophicum (strain ATCC 43914 / DSM 3382 / VKM B-1955 / HRM2) (Desulfobacterium autotrophicum), this protein is Aspartyl/glutamyl-tRNA(Asn/Gln) amidotransferase subunit C.